Consider the following 808-residue polypeptide: Sucrose synthase 2 (808 aa).

At S10 the chain carries Phosphoserine; by CPK. A GT-B glycosyltransferase region spans residues 272–749 (MMFNVVILSP…GLQRIYEKYT (478 aa)).

Belongs to the glycosyltransferase 1 family. Plant sucrose synthase subfamily. Homotetramer or heterotetramer with SUS1. In terms of processing, phosphorylated at Ser-10 by CPK23 in developing seeds. As to expression, predominantly expressed in the leaf tissues. Expressed in seeds, and at lower levels in roots. Expressed in leaf mesophyll and phloem (at protein level).

The enzyme catalyses an NDP-alpha-D-glucose + D-fructose = a ribonucleoside 5'-diphosphate + sucrose + H(+). Its activity is regulated as follows. Activated by phosphorylation at Ser-10 by CPK23. Sucrose-cleaving enzyme that provides UDP-glucose and fructose for various metabolic pathways. Functions in developing seeds by supplying substrates for the biosynthesis of storage products. The sequence is that of Sucrose synthase 2 (SUS2) from Oryza sativa subsp. japonica (Rice).